The sequence spans 356 residues: MRVTDFSFELPESLIAHYPMPERSSCRLLSLDGPTGALTHGTFTDLLDKLNPGDLLVFNNTRVIPARLFGRKASGGKIEVLVERMLDEKRILAHIRASKAPKPGAELLLGDDESINATMTARHGALFEVEFNDDRSVLDILNSIGHIPLPPYIDRPDEDADRELYQTVYSEKPGAVAAPTAGLHFDEPLLEKLRAKGVEMAFVTLHVGAGTFQPVRVDTIEDHIMHSEYAEVPQDVVDAVLAAKARGNRVIAVGTTSVRSLESAAQAAKNDLIEPFFDDTQIFIYPGFQYKVVDALVTNFHLPESTLIMLVSAFAGYQHTMNAYKAAVEEKYRFFSYGDAMFITYNPQAINERVGE.

This sequence belongs to the QueA family. Monomer.

The protein resides in the cytoplasm. It carries out the reaction 7-aminomethyl-7-carbaguanosine(34) in tRNA + S-adenosyl-L-methionine = epoxyqueuosine(34) in tRNA + adenine + L-methionine + 2 H(+). It participates in tRNA modification; tRNA-queuosine biosynthesis. Its function is as follows. Transfers and isomerizes the ribose moiety from AdoMet to the 7-aminomethyl group of 7-deazaguanine (preQ1-tRNA) to give epoxyqueuosine (oQ-tRNA). The sequence is that of S-adenosylmethionine:tRNA ribosyltransferase-isomerase from Escherichia coli (strain UTI89 / UPEC).